The chain runs to 389 residues: Leucine aminopeptidase 1 (389 aa).

An N-terminal signal peptide occupies residues 1–19; sequence MKLPALLTLGVAASTMVLA. Residues 20 to 88 constitute a propeptide that is removed on maturation; sequence AIAPDQVPLN…LPKVFPTPAV (69 aa). Residues Asn-96, Asn-119, Asn-149, Asn-164, and Asn-181 are each glycosylated (N-linked (GlcNAc...) asparagine). Residues His-189 and Asp-208 each contribute to the Zn(2+) site. An N-linked (GlcNAc...) asparagine glycan is attached at Asn-233. Zn(2+) is bound by residues Glu-247 and Asp-274. The cysteines at positions 323 and 327 are disulfide-linked. A Zn(2+)-binding site is contributed by His-356.

Belongs to the peptidase M28 family. M28E subfamily. Monomer. It depends on Zn(2+) as a cofactor.

The protein localises to the secreted. Extracellular aminopeptidase that allows assimilation of proteinaceous substrates. The polypeptide is Leucine aminopeptidase 1 (LAP1) (Paracoccidioides brasiliensis (strain Pb18)).